A 552-amino-acid polypeptide reads, in one-letter code: Macrophage colony-stimulating factor 1 (552 aa).

The N-terminal stretch at 1–32 (MTARGAAGRCPSSTWLGSRLLLVCLLMSRSIA) is a signal peptide. Residues 33–492 (KEVSEHCSHM…EGSSDPQIPE (460 aa)) are Extracellular-facing. Intrachain disulfides connect cysteine 39/cysteine 122, cysteine 80/cysteine 171, and cysteine 134/cysteine 178. 3 N-linked (GlcNAc...) asparagine glycosylation sites follow: asparagine 107, asparagine 154, and asparagine 172. The span at 197 to 207 (TPSSDPASASP) shows a compositional bias: low complexity. The disordered stretch occupies residues 197-293 (TPSSDPASAS…GGPVPGVEDI (97 aa)). Over residues 254-267 (PRSTCQTLESTEQP) the composition is skewed to polar residues. Positions 268-278 (NHGDRLTEDSQ) are enriched in basic and acidic residues. O-linked (Xyl...) (chondroitin sulfate) serine glycosylation occurs at serine 308. Disordered regions lie at residues 321-412 (KFSP…RVSN) and 439-465 (GKRSTRDRRSPAELEGGSASEGAARPV). 3 stretches are compositionally biased toward basic and acidic residues: residues 350 to 364 (STEDQKPVDITDRPL), 382 to 396 (EKTDGTSTLREDHQE), and 439 to 450 (GKRSTRDRRSPA). A glycan (O-linked (GalNAc...) threonine) is linked at threonine 360. The chain crosses the membrane as a helical span at residues 493–515 (SVFHLLVPGIILVLLTVGGLLFY). The Cytoplasmic portion of the chain corresponds to 516–552 (KWKWRSHRDPQTLDSSVGRPEDSSLTQDEDRQVELPV). A disordered region spans residues 525–552 (PQTLDSSVGRPEDSSLTQDEDRQVELPV). The segment covering 543–552 (DEDRQVELPV) has biased composition (basic and acidic residues).

Homodimer or heterodimer; disulfide-linked. Likely to exist in multiple forms: homodimer consisting of 2 identical 150-200 kDa proteoglycan subunits, heterodimer consisting of a 150-200 kDa proteoglycan subunit and a truncated 43 kDa subunit, and homodimer consisting of 2 identical 43 kDa subunits. Interacts with CSF1R. Post-translationally, N-glycosylated. In terms of processing, O-glycosylated; contains chondroitin sulfate.

Its subcellular location is the cell membrane. It is found in the secreted. It localises to the extracellular space. Cytokine that plays an essential role in the regulation of survival, proliferation and differentiation of hematopoietic precursor cells, especially mononuclear phagocytes, such as macrophages and monocytes. Promotes the release of pro-inflammatory chemokines, and thereby plays an important role in innate immunity and in inflammatory processes. Plays an important role in the regulation of osteoclast proliferation and differentiation, the regulation of bone resorption, and is required for normal bone development. Required for normal male and female fertility. Promotes reorganization of the actin cytoskeleton, regulates formation of membrane ruffles, cell adhesion and cell migration. Plays a role in lipoprotein clearance. The protein is Macrophage colony-stimulating factor 1 (Csf1) of Mus musculus (Mouse).